Consider the following 117-residue polypeptide: Toxin CSTX-12 (117 aa).

Positions 1 to 20 are cleaved as a signal peptide; it reads MKVLVICAVLFLTIFSNSSA. The propeptide occupies 21 to 47; that stretch reads ETEDDFLEDESFEADDVIPFLAREQVR. Cystine bridges form between cysteine 50–cysteine 65, cysteine 57–cysteine 74, cysteine 64–cysteine 95, and cysteine 76–cysteine 93. Positions 82–87 are excised as a propeptide; the sequence is RSDTAR. The residue at position 116 (alanine 116) is an Alanine amide.

The protein belongs to the neurotoxin 19 (CSTX) family. 12 subfamily. In terms of assembly, heterodimer of A and B chains; disulfide-linked. Interacts with CSTX-1 (AC P81694), and with CSTX-9 (AC P58604). Expressed by the venom gland.

The protein localises to the secreted. The protein resides in the target cell membrane. Synergistic toxin that induces or increases a cytolytic effect when combined with CSTX-1 (AC P81694) or CSTX-9 (AC P58604). When alone, has a weak insecticidal activity, with an unknown molecular target. The sequence is that of Toxin CSTX-12 from Cupiennius salei (American wandering spider).